Here is a 192-residue protein sequence, read N- to C-terminus: MMPRLILASTSAYRRELLGRLHLDFDTARPEVDEHALPGETPQALATRLAGEKARAVAVRFPEAWVIGSDQVADLDGQALGKPGTLEQARAQLTRMSGRMVRFQTAVSLIGPDGFAAQALDLTDVQVRPLQPQEIERYLAAEPALECAGSFKCEGLGITLFDAIRSNDPTALVGLPLIAVARLLRQAGFSLP.

The active-site Proton acceptor is the aspartate 70.

Belongs to the Maf family. YceF subfamily. The cofactor is a divalent metal cation.

Its subcellular location is the cytoplasm. The catalysed reaction is N(7)-methyl-GTP + H2O = N(7)-methyl-GMP + diphosphate + H(+). Its function is as follows. Nucleoside triphosphate pyrophosphatase that hydrolyzes 7-methyl-GTP (m(7)GTP). May have a dual role in cell division arrest and in preventing the incorporation of modified nucleotides into cellular nucleic acids. The sequence is that of 7-methyl-GTP pyrophosphatase from Xanthomonas campestris pv. campestris (strain 8004).